The primary structure comprises 356 residues: MTLRETVNNAHSHWMDADGPESEIIISSRVRVARNLAGIPFPHLLNKENSEKVIHAVRLAISNKEASELLGGLELSSLGELSPLERQILVDKHLISPDLLNDFQRKAVVLREDEVVSIMVNEEDHLRIQCILPGLQLKEAWDVVNRVDDGLEKTLDYAFSEKVGYLTSCPTNVGTGMRASVMIHLPGLKLAKQLAGVLNAINKLGLTVRGLYGEGTEALGDLFQISNQITLGQSEEEIINNLISIARQILAQEQAARRNLYKDRREVIEDRVFRAFGALKYARILSSEEAMRLFSDLRLGVEMKIISGIPVRLLNELMVKIRPAFITKMAGRELTPYQRDIFRAGLIRREFANLPV.

The 233-residue stretch at 24 to 256 folds into the Phosphagen kinase C-terminal domain; sequence IIISSRVRVA…RQILAQEQAA (233 aa). ATP is bound by residues 27 to 31, H93, R127, 178 to 182, and 209 to 214; these read SSRVR, RASVM, and RGLYGE. Residues 339 to 344 carry the RDXXRA motif of the pArg binding pocket involved in allosteric regulation motif; that stretch reads RDIFRA.

The protein belongs to the ATP:guanido phosphotransferase family.

It catalyses the reaction L-arginyl-[protein] + ATP = N(omega)-phospho-L-arginyl-[protein] + ADP + H(+). With respect to regulation, appears to be allosterically activated by the binding of pArg-containing polypeptides to the pArg-binding pocket localized in the C-terminal domain of McsB. In terms of biological role, catalyzes the specific phosphorylation of arginine residues in proteins. In Pelotomaculum thermopropionicum (strain DSM 13744 / JCM 10971 / SI), this protein is Protein-arginine kinase.